Here is a 197-residue protein sequence, read N- to C-terminus: Adenylate kinase (197 aa).

Residue 7–15 (ALPGSGKTT) participates in ATP binding.

It belongs to the archaeal adenylate kinase family.

It localises to the cytoplasm. The enzyme catalyses AMP + ATP = 2 ADP. This is Adenylate kinase (adkA) from Pyrobaculum aerophilum (strain ATCC 51768 / DSM 7523 / JCM 9630 / CIP 104966 / NBRC 100827 / IM2).